The chain runs to 109 residues: MQQLEFYPIAFLILAVMLEIVANILLKMSDGFRRKWLGILSLLSVLGAFSALAQAVKGIELSVAYALWGGFGIAATVAAGWILFNQRLNYKGWIGLILLLAGMVMIKLS.

4 consecutive transmembrane segments (helical) span residues 6 to 26 (FYPI…NILL), 36 to 56 (WLGI…AQAV), 64 to 84 (AYAL…WILF), and 88 to 108 (LNYK…MIKL).

It belongs to the drug/metabolite transporter (DMT) superfamily. Small multidrug resistance (SMR) (TC 2.A.7.1) family. MdtI subfamily. In terms of assembly, forms a complex with MdtJ.

The protein localises to the cell inner membrane. Catalyzes the excretion of spermidine. The polypeptide is Spermidine export protein MdtI (Yersinia pseudotuberculosis serotype O:1b (strain IP 31758)).